Consider the following 202-residue polypeptide: Orotate phosphoribosyltransferase (202 aa).

5-phospho-alpha-D-ribose 1-diphosphate contacts are provided by residues lysine 93 and 113-121 (EDIITTGGS). Orotate contacts are provided by threonine 117 and arginine 145.

The protein belongs to the purine/pyrimidine phosphoribosyltransferase family. PyrE subfamily. In terms of assembly, homodimer. It depends on Mg(2+) as a cofactor.

It catalyses the reaction orotidine 5'-phosphate + diphosphate = orotate + 5-phospho-alpha-D-ribose 1-diphosphate. It participates in pyrimidine metabolism; UMP biosynthesis via de novo pathway; UMP from orotate: step 1/2. Its function is as follows. Catalyzes the transfer of a ribosyl phosphate group from 5-phosphoribose 1-diphosphate to orotate, leading to the formation of orotidine monophosphate (OMP). This chain is Orotate phosphoribosyltransferase, found in Campylobacter jejuni subsp. doylei (strain ATCC BAA-1458 / RM4099 / 269.97).